The following is a 947-amino-acid chain: Translation initiation factor IF-2 (947 aa).

The tract at residues 47-332 (LRESFGGGKS…RGRKSKRAKR (286 aa)) is disordered. The span at 86–95 (APDRSLDAAL) shows a compositional bias: basic and acidic residues. A compositionally biased stretch (pro residues) spans 105–123 (APVPAPAPAPTPAPAPAPA). A compositionally biased stretch (low complexity) spans 131-145 (APPAATPAAPAASAA). Composition is skewed to pro residues over residues 146-171 (PAPP…PQAP) and 210-225 (PRPQ…PGAP). Gly residues predominate over residues 255–318 (RPGGGRPGGP…GAAGAFGRPG (64 aa)). Residues 322–331 (RRGRKSKRAK) are compositionally biased toward basic residues. The tr-type G domain occupies 443–614 (TRPPVVTVMG…AVLLTADAAL (172 aa)). The segment at 452 to 459 (GHVDHGKT) is G1. Residue 452–459 (GHVDHGKT) coordinates GTP. The segment at 477–481 (GITQH) is G2. The segment at 502-505 (DTPG) is G3. Residues 502-506 (DTPGH) and 556-559 (NKID) each bind GTP. Residues 556–559 (NKID) form a G4 region. Residues 592-594 (SAK) are G5.

The protein belongs to the TRAFAC class translation factor GTPase superfamily. Classic translation factor GTPase family. IF-2 subfamily.

Its subcellular location is the cytoplasm. Its function is as follows. One of the essential components for the initiation of protein synthesis. Protects formylmethionyl-tRNA from spontaneous hydrolysis and promotes its binding to the 30S ribosomal subunits. Also involved in the hydrolysis of GTP during the formation of the 70S ribosomal complex. The sequence is that of Translation initiation factor IF-2 from Mycobacterium marinum (strain ATCC BAA-535 / M).